Reading from the N-terminus, the 215-residue chain is HTH-type transcriptional regulator for conjugative element R391 (215 aa).

In terms of domain architecture, HTH cro/C1-type spans 8–61 (LNHALQLTGVTQSELARRIGIKQQSISQICSGKSARSRYTMQIAEALRVNAHWL). Positions 19-38 (QSELARRIGIKQQSISQICS) form a DNA-binding region, H-T-H motif.

In terms of biological role, may control the expression of the integrase and inhibit excision of the mobile element R391, and regulate the expression of other genes as well. This chain is HTH-type transcriptional regulator for conjugative element R391, found in Providencia rettgeri.